Reading from the N-terminus, the 331-residue chain is DNA-directed RNA polymerase subunit alpha (331 aa).

The tract at residues 1–226 (MLIAQRPTLT…ELFGLARELN (226 aa)) is alpha N-terminal domain (alpha-NTD). The segment at 243 to 331 (LSSELSMPIE…SYDEDETTTN (89 aa)) is alpha C-terminal domain (alpha-CTD).

It belongs to the RNA polymerase alpha chain family. Homodimer. The RNAP catalytic core consists of 2 alpha, 1 beta, 1 beta' and 1 omega subunit. When a sigma factor is associated with the core the holoenzyme is formed, which can initiate transcription.

The catalysed reaction is RNA(n) + a ribonucleoside 5'-triphosphate = RNA(n+1) + diphosphate. Its function is as follows. DNA-dependent RNA polymerase catalyzes the transcription of DNA into RNA using the four ribonucleoside triphosphates as substrates. This is DNA-directed RNA polymerase subunit alpha from Clavibacter sepedonicus (Clavibacter michiganensis subsp. sepedonicus).